Here is a 538-residue protein sequence, read N- to C-terminus: Cytochrome P450 monooxygenase flvC (538 aa).

A helical membrane pass occupies residues 17–37; sequence TVLIAGLLVYWVGSAIFLAVL. C478 contacts heme.

This sequence belongs to the cytochrome P450 family. Heme is required as a cofactor.

The protein resides in the membrane. It carries out the reaction pre-flavunoidine + reduced [NADPH--hemoprotein reductase] + O2 = 10-hydroxy-pre-flavunoidine + oxidized [NADPH--hemoprotein reductase] + H2O + H(+). The protein operates within secondary metabolite biosynthesis; terpenoid biosynthesis. In terms of biological role, cytochrome P450 monooxygenase; part of the gene cluster that mediates the biosynthesis of flavunoidine, an alkaloidal terpenoid with a tetracyclic cage-like core connected to dimethylcadaverine via a C-N bond and acylated with 5,5-dimethyl-L-pipecolate. The tetracyclic core is synthesized by the terpene cyclase flvE and the cytochrome P450 monooxygenase flvD. The terpene cyclase flvE catalyzes the cyclization of farnesyl pyrophosphate (FPP) to form (1R,4R,5S)-(+)-acoradiene and the cytochrome P450 monooxygenase flvD is then responsible for oxidative conversion of (1R,4R,5S)-(+)-acoradiene into the tetracyclic cage present in the final product flavunoidine. In parallel, the N-methyltransferase flvH dimethylates L-lysine to give N,N-dimethyl-L-Lysin which is decarboxylated by flvG to afford dimethylcadaverine. The terpene cyclase-like protein flvF is the enzyme that attaches the dimethylcadaverine precusor at the C-7 of the tetracyclic cage to yield pre-flavunoidine. The cytochrome monooxygenase flvC hydroxylates the C-10 position of pre-flavunoidine whereas the NRPS flvI acylates the terpenoid core at the hydroxylated C-10 with dimethylpipecolate to yield final flavunoidine. The bifunctional enzyme flvA and the dehydrogenase flvB are responsible for the synthesis of the dimethylpipecolate precursor. The PLP-dependent lyase domain of flvA might use L-O-acetyl-homoserine and alpha-keto-isovalerate to form an intermediary ketone that can cyclize intramolecularly to yield an imine. The imine can be reduced by flvB to yield the 6-carboxylated pipecolate. The C-terminal alpha-KG-dependent oxygenase domain of flvA is then proposed to catalyze the decarboxylation to yield dimethylpipecolate. This is Cytochrome P450 monooxygenase flvC from Aspergillus flavus (strain ATCC 200026 / FGSC A1120 / IAM 13836 / NRRL 3357 / JCM 12722 / SRRC 167).